The chain runs to 417 residues: Glutamate-1-semialdehyde 2,1-aminomutase (417 aa).

At Lys-263 the chain carries N6-(pyridoxal phosphate)lysine.

Belongs to the class-III pyridoxal-phosphate-dependent aminotransferase family. HemL subfamily. Requires pyridoxal 5'-phosphate as cofactor.

The protein localises to the cytoplasm. It carries out the reaction (S)-4-amino-5-oxopentanoate = 5-aminolevulinate. Its pathway is porphyrin-containing compound metabolism; protoporphyrin-IX biosynthesis; 5-aminolevulinate from L-glutamyl-tRNA(Glu): step 2/2. The polypeptide is Glutamate-1-semialdehyde 2,1-aminomutase (Methanospirillum hungatei JF-1 (strain ATCC 27890 / DSM 864 / NBRC 100397 / JF-1)).